Here is a 108-residue protein sequence, read N- to C-terminus: Cell cycle protein GpsB (108 aa).

Positions 32-69 (LDNVIKDYENFNAQIEALKAENEALKKAKYQARNTVSA) form a coiled coil.

This sequence belongs to the GpsB family. In terms of assembly, forms polymers through the coiled coil domains. Interacts with PBP1, MreC and EzrA.

It localises to the cytoplasm. Its function is as follows. Divisome component that associates with the complex late in its assembly, after the Z-ring is formed, and is dependent on DivIC and PBP2B for its recruitment to the divisome. Together with EzrA, is a key component of the system that regulates PBP1 localization during cell cycle progression. Its main role could be the removal of PBP1 from the cell pole after pole maturation is completed. Also contributes to the recruitment of PBP1 to the division complex. Not essential for septum formation. The protein is Cell cycle protein GpsB of Streptococcus pyogenes serotype M49 (strain NZ131).